A 307-amino-acid polypeptide reads, in one-letter code: 4-hydroxythreonine-4-phosphate dehydrogenase (307 aa).

Substrate-binding residues include His121 and Thr122. Residues His150, His189, and His246 each coordinate a divalent metal cation. The substrate site is built by Lys254, Asn263, and Arg272.

Belongs to the PdxA family. As to quaternary structure, homodimer. Zn(2+) is required as a cofactor. Requires Mg(2+) as cofactor. It depends on Co(2+) as a cofactor.

It localises to the cytoplasm. It catalyses the reaction 4-(phosphooxy)-L-threonine + NAD(+) = 3-amino-2-oxopropyl phosphate + CO2 + NADH. The protein operates within cofactor biosynthesis; pyridoxine 5'-phosphate biosynthesis; pyridoxine 5'-phosphate from D-erythrose 4-phosphate: step 4/5. Its function is as follows. Catalyzes the NAD(P)-dependent oxidation of 4-(phosphooxy)-L-threonine (HTP) into 2-amino-3-oxo-4-(phosphooxy)butyric acid which spontaneously decarboxylates to form 3-amino-2-oxopropyl phosphate (AHAP). The chain is 4-hydroxythreonine-4-phosphate dehydrogenase from Campylobacter fetus subsp. fetus (strain 82-40).